A 131-amino-acid polypeptide reads, in one-letter code: Global transcriptional regulator Spx (131 aa).

Cysteine 10 and cysteine 13 form a disulfide bridge.

The protein belongs to the ArsC family. Spx subfamily. In terms of assembly, interacts with the C-terminal domain of the alpha subunit of the RNAP.

The protein resides in the cytoplasm. Functionally, global transcriptional regulator that plays a key role in stress response and exerts either positive or negative regulation of genes. Acts by interacting with the C-terminal domain of the alpha subunit of the RNA polymerase (RNAP). This interaction can enhance binding of RNAP to the promoter region of target genes and stimulate their transcription, or block interaction of RNAP with activator. This is Global transcriptional regulator Spx from Listeria innocua serovar 6a (strain ATCC BAA-680 / CLIP 11262).